We begin with the raw amino-acid sequence, 415 residues long: Serine hydroxymethyltransferase 3 (415 aa).

Residues Leu122 and 126–128 (GHL) each bind (6S)-5,6,7,8-tetrahydrofolate. Lys230 bears the N6-(pyridoxal phosphate)lysine mark.

It belongs to the SHMT family. In terms of assembly, homodimer. It depends on pyridoxal 5'-phosphate as a cofactor.

The protein resides in the cytoplasm. The enzyme catalyses (6R)-5,10-methylene-5,6,7,8-tetrahydrofolate + glycine + H2O = (6S)-5,6,7,8-tetrahydrofolate + L-serine. It participates in one-carbon metabolism; tetrahydrofolate interconversion. Its pathway is amino-acid biosynthesis; glycine biosynthesis; glycine from L-serine: step 1/1. Catalyzes the reversible interconversion of serine and glycine with tetrahydrofolate (THF) serving as the one-carbon carrier. This reaction serves as the major source of one-carbon groups required for the biosynthesis of purines, thymidylate, methionine, and other important biomolecules. Also exhibits THF-independent aldolase activity toward beta-hydroxyamino acids, producing glycine and aldehydes, via a retro-aldol mechanism. In Burkholderia lata (strain ATCC 17760 / DSM 23089 / LMG 22485 / NCIMB 9086 / R18194 / 383), this protein is Serine hydroxymethyltransferase 3.